The primary structure comprises 441 residues: Ribulose bisphosphate carboxylase large chain (441 aa).

Lys-5 is subject to N6,N6,N6-trimethyllysine. Substrate-binding residues include Asn-114 and Thr-164. The Proton acceptor role is filled by Lys-166. Lys-168 contributes to the substrate binding site. Lys-192, Asp-194, and Glu-195 together coordinate Mg(2+). At Lys-192 the chain carries N6-carboxylysine. His-285 acts as the Proton acceptor in catalysis. Substrate-binding residues include Arg-286, His-318, and Ser-370.

It belongs to the RuBisCO large chain family. Type I subfamily. In terms of assembly, heterohexadecamer of 8 large chains and 8 small chains; disulfide-linked. The disulfide link is formed within the large subunit homodimers. The cofactor is Mg(2+). In terms of processing, the disulfide bond which can form in the large chain dimeric partners within the hexadecamer appears to be associated with oxidative stress and protein turnover.

The protein resides in the plastid. It is found in the chloroplast. The enzyme catalyses 2 (2R)-3-phosphoglycerate + 2 H(+) = D-ribulose 1,5-bisphosphate + CO2 + H2O. The catalysed reaction is D-ribulose 1,5-bisphosphate + O2 = 2-phosphoglycolate + (2R)-3-phosphoglycerate + 2 H(+). Its function is as follows. RuBisCO catalyzes two reactions: the carboxylation of D-ribulose 1,5-bisphosphate, the primary event in carbon dioxide fixation, as well as the oxidative fragmentation of the pentose substrate in the photorespiration process. Both reactions occur simultaneously and in competition at the same active site. In Pellaea rotundifolia (Button fern), this protein is Ribulose bisphosphate carboxylase large chain.